We begin with the raw amino-acid sequence, 342 residues long: Arrestin domain-containing protein 5 (342 aa).

This sequence belongs to the arrestin family. In terms of tissue distribution, testis-enriched.

The protein localises to the membrane. Its function is as follows. Plays an essential role in spermatogenesis. May be involved in the anchoring of the sperm head to the tail during spermatogenesis by affecting SEC22A-mediated SUN5 and NDC1 transport and localization. The polypeptide is Arrestin domain-containing protein 5 (ARRDC5) (Homo sapiens (Human)).